A 185-amino-acid polypeptide reads, in one-letter code: Intraflagellar transport protein 22 homolog (185 aa).

Residues Gly10–Thr17, Asp63–Asp67, and His123–Gly126 each bind GTP. A Phosphoserine modification is found at Ser137.

It belongs to the small GTPase superfamily. Rab family. In terms of assembly, component of the IFT complex B, at least composed of IFT20, IFT22, IFT25, IFT27, IFT46, IFT52, TRAF3IP1/IFT54, IFT57, IFT74, IFT80, IFT81, and IFT88. Interacts with IFT88. Interacts with CFAP61.

The protein resides in the cell projection. Its subcellular location is the cilium. Its function is as follows. Small GTPase-like component of the intraflagellar transport (IFT) complex B. In Macaca fascicularis (Crab-eating macaque), this protein is Intraflagellar transport protein 22 homolog (IFT22).